We begin with the raw amino-acid sequence, 222 residues long: Ethylene-inducing xylanase 2 (222 aa).

The signal sequence occupies residues 1–19 (MITFSSLLVTFSAISTSLA). A GH11 domain is found at 36–222 (QRNESSLVRR…GEGAATQTVS (187 aa)). N-linked (GlcNAc...) asparagine glycosylation is found at N38 and N94. The active-site Nucleophile is E120. The active-site Proton donor is the E209.

This sequence belongs to the glycosyl hydrolase 11 (cellulase G) family.

It carries out the reaction Endohydrolysis of (1-&gt;4)-beta-D-xylosidic linkages in xylans.. Its pathway is glycan degradation; xylan degradation. Functionally, endo-1,4-beta-xylanase involved in the hydrolysis of xylan, a major structural heterogeneous polysaccharide found in plant biomass representing the second most abundant polysaccharide in the biosphere, after cellulose. May act as an elicitor of plant defense responses in certain plants but does not exhibit any cell death when transiently expressed in N.benthamiana. The sequence is that of Ethylene-inducing xylanase 2 from Botryotinia fuckeliana (strain B05.10) (Noble rot fungus).